Consider the following 402-residue polypeptide: Subtilisin-like protease 9 (402 aa).

A signal peptide spans 1 to 18 (MGFFRILFSLSLCALSLA). A propeptide spanning residues 19 to 120 (IPSKLIGLEN…VEVDRVVKLD (102 aa)) is cleaved from the precursor. The Inhibitor I9 domain occupies 36–119 (SYIVVMKSAV…YVEVDRVVKL (84 aa)). In terms of domain architecture, Peptidase S8 spans 130–402 (SWGLGRISHR…KKLLYNGSGA (273 aa)). Residues Asp-162 and His-193 each act as charge relay system in the active site. Asn-254 carries an N-linked (GlcNAc...) asparagine glycan. The active-site Charge relay system is the Ser-348. Residues Asn-390 and Asn-398 are each glycosylated (N-linked (GlcNAc...) asparagine).

The protein belongs to the peptidase S8 family.

Its subcellular location is the secreted. Secreted subtilisin-like serine protease with keratinolytic activity that contributes to pathogenicity. The polypeptide is Subtilisin-like protease 9 (SUB9) (Arthroderma gypseum (strain ATCC MYA-4604 / CBS 118893) (Microsporum gypseum)).